A 204-amino-acid polypeptide reads, in one-letter code: LexA repressor (204 aa).

Positions 28–48 form a DNA-binding region, H-T-H motif; it reads VREIGQAVGLASSSTVHGHLS. Catalysis depends on for autocatalytic cleavage activity residues Ser126 and Lys164.

This sequence belongs to the peptidase S24 family. Homodimer.

The enzyme catalyses Hydrolysis of Ala-|-Gly bond in repressor LexA.. Its function is as follows. Represses a number of genes involved in the response to DNA damage (SOS response), including recA and lexA. In the presence of single-stranded DNA, RecA interacts with LexA causing an autocatalytic cleavage which disrupts the DNA-binding part of LexA, leading to derepression of the SOS regulon and eventually DNA repair. The polypeptide is LexA repressor (Bacillus mycoides (strain KBAB4) (Bacillus weihenstephanensis)).